The chain runs to 298 residues: Tritrans,polycis-undecaprenyl-diphosphate synthase (geranylgeranyl-diphosphate specific) (298 aa).

D35 is a catalytic residue. Residue D35 coordinates Mg(2+). Substrate contacts are provided by residues 36–39 (GNRR), R48, H52, and 80–82 (STE). N83 serves as the catalytic Proton acceptor. Residues F84, R86, R208, and 214-216 (RIS) contribute to the substrate site.

It belongs to the UPP synthase family. In terms of assembly, homodimer. It depends on Mg(2+) as a cofactor.

The catalysed reaction is geranylgeranyl diphosphate + 7 isopentenyl diphosphate = tri-trans,hepta-cis-undecaprenyl diphosphate + 7 diphosphate. Catalyzes the sequential condensation of isopentenyl diphosphate (IPP) with geranylgeranyl diphosphate (GGPP) to yield (2Z,6Z,10Z,14Z,18Z,22Z,26Z,30E,34E,38E)-undecaprenyl diphosphate (tritrans,heptacis-UPP). It is probably the precursor of glycosyl carrier lipids. The polypeptide is Tritrans,polycis-undecaprenyl-diphosphate synthase (geranylgeranyl-diphosphate specific) (Methanosarcina mazei (strain ATCC BAA-159 / DSM 3647 / Goe1 / Go1 / JCM 11833 / OCM 88) (Methanosarcina frisia)).